Reading from the N-terminus, the 586-residue chain is Putative Lon protease homolog (586 aa).

One can recognise a Lon proteolytic domain in the interval 346–543; sequence GERIGQINAL…TDALPLLLNL (198 aa). Active-site residues include S438 and K481.

This sequence belongs to the peptidase S16 family.

The protein is Putative Lon protease homolog (ycbZ) of Escherichia coli (strain K12).